The primary structure comprises 333 residues: Malate dehydrogenase (333 aa).

Residues 10 to 15 and aspartate 34 each bind NAD(+); that span reads GGGQIG. Residues arginine 83 and arginine 89 each contribute to the substrate site. Residues asparagine 96 and 119–121 each bind NAD(+); that span reads ITN. Substrate contacts are provided by asparagine 121 and arginine 152. Histidine 176 acts as the Proton acceptor in catalysis.

This sequence belongs to the LDH/MDH superfamily. MDH type 3 family.

It catalyses the reaction (S)-malate + NAD(+) = oxaloacetate + NADH + H(+). Its function is as follows. Catalyzes the reversible oxidation of malate to oxaloacetate. This is Malate dehydrogenase from Parvibaculum lavamentivorans (strain DS-1 / DSM 13023 / NCIMB 13966).